A 2009-amino-acid chain; its full sequence is Sodium channel protein type 1 subunit alpha (2009 aa).

Over 1–128 the chain is Cytoplasmic; the sequence is MEQTVLVPPG…KIAIKILVHS (128 aa). Positions 28–48 are enriched in basic and acidic residues; the sequence is RIAEEKAKNPKPDKKDDDENG. The segment at 28 to 60 is disordered; that stretch reads RIAEEKAKNPKPDKKDDDENGPKPNSDLEAGKN. The I repeat unit spans residues 110–454; that stretch reads ILTPFNPLRK…QQMLEQLKKQ (345 aa). A helical transmembrane segment spans residues 129–146; the sequence is LFSMLIMCTILTNCVFMT. Topologically, residues 147-152 are extracellular; it reads MSNPPD. Residues 153–177 traverse the membrane as a helical segment; it reads WTKNVEYTFTGIYTFESLIKIIARG. The Cytoplasmic segment spans residues 178–188; it reads FCLEDFTFLRD. The chain crosses the membrane as a helical span at residues 189-205; the sequence is PWNWLDFTVITFAYVTE. At 206-213 the chain is on the extracellular side; sequence FVDLGNVS. The chain crosses the membrane as a helical span at residues 214 to 235; sequence ALRTFRVLRALKTISVIPGLKT. Residues 236–245 lie on the Cytoplasmic side of the membrane; it reads IVGALIQSVK. The chain crosses the membrane as a helical span at residues 246 to 269; the sequence is KLSDVMILTVFCLSVFALIGLQLF. Topologically, residues 270 to 369 are extracellular; the sequence is MGNLRNKCVQ…YGYTSFDTFS (100 aa). Cystine bridges form between Cys277–Cys345 and Cys336–Cys351. 4 N-linked (GlcNAc...) asparagine glycosylation sites follow: Asn295, Asn301, Asn306, and Asn338. The pore-forming intramembrane region spans 370–384; that stretch reads WAFLSLFRLMTQDFW. The Extracellular portion of the chain corresponds to 385 to 397; the sequence is ENLYQLTLRAAGK. A helical membrane pass occupies residues 398-423; it reads TYMIFFVLVIFLGSFYLINLILAVVA. Over 424–768 the chain is Cytoplasmic; that stretch reads MAYEEQNQAT…HIVNLVVMDP (345 aa). Residues 455–528 are disordered; sequence QEAAQQAAAT…EFHKSESEDS (74 aa). Over residues 456 to 466 the composition is skewed to low complexity; the sequence is EAAQQAAATTA. At Ser470 the chain carries Phosphoserine. Residues 479–492 are compositionally biased toward low complexity; sequence LSDSSSEASKLSSK. The span at 495–506 shows a compositional bias: basic residues; the sequence is KERRNRRKKRKQ. Residues 507–528 show a composition bias toward basic and acidic residues; that stretch reads KEQSGGEEKDDDEFHKSESEDS. 6 positions are modified to phosphoserine: Ser523, Ser525, Ser550, Ser551, Ser607, and Ser730. Residues 584–627 are disordered; that stretch reads VGSENDFADDEHSTFEDNESRRDSLFVPRRHGERRNSNLSQTSR. The span at 593–607 shows a compositional bias: basic and acidic residues; that stretch reads DEHSTFEDNESRRDS. The II repeat unit spans residues 750 to 1022; the sequence is CSPYWLKVKH…QIAVDRMHKG (273 aa). Residues 769–787 form a helical membrane-spanning segment; sequence FVDLAITICIVLNTLFMAM. The Extracellular portion of the chain corresponds to 788–797; the sequence is EHYPMTEHFN. The helical transmembrane segment at 798-820 threads the bilayer; it reads HVLTVGNLVFTGIFTAEMFLKII. The Cytoplasmic portion of the chain corresponds to 821–830; the sequence is AMDPYYYFQE. Residues 831 to 849 form a helical membrane-spanning segment; the sequence is GWNIFDGFIVTLSLVELGL. The Extracellular portion of the chain corresponds to 850–854; it reads ANVEG. The helical transmembrane segment at 855-874 threads the bilayer; that stretch reads LSVLRSFRLLRVFKLAKSWP. Over 875–891 the chain is Cytoplasmic; the sequence is TLNMLIKIIGNSVGALG. The helical transmembrane segment at 892–912 threads the bilayer; it reads NLTLVLAIIVFIFAVVGMQLF. Over 913–938 the chain is Extracellular; sequence GKSYKDCVCKIATDCKLPRWHMNDFF. Cys921 and Cys927 are oxidised to a cystine. The segment at residues 939 to 952 is an intramembrane region (pore-forming); the sequence is HSFLIVFRVLCGEW. At 953 to 965 the chain is on the extracellular side; the sequence is IETMWDCMEVAGQ. Cys959 and Cys968 are disulfide-bonded. Residues 966–992 traverse the membrane as a helical segment; the sequence is AMCLTVFMMVMVIGNLVVLNLFLALLL. At 993-1218 the chain is on the cytoplasmic side; it reads SSFSADNLAA…RTCFRIVEHN (226 aa). The tract at residues 1129-1163 is disordered; that stretch reads TEDFSSESDLEESKEKLNESSSSSEGSTVDIGAPA. The III repeat unit spans residues 1200–1514; that stretch reads RGKQWWNLRR…KKYYNAMKKL (315 aa). Residues 1219 to 1237 form a helical membrane-spanning segment; it reads WFETFIVFMILLSSGALAF. Topologically, residues 1238–1250 are extracellular; it reads EDIYIDQRKTIKT. The chain crosses the membrane as a helical span at residues 1251–1276; that stretch reads MLEYADKVFTYIFILEMLLKWVAYGY. The Cytoplasmic portion of the chain corresponds to 1277–1278; that stretch reads QT. A helical transmembrane segment spans residues 1279–1304; that stretch reads YFTNAWCWLDFLIVDVSLVSLTANAL. Over 1305 to 1313 the chain is Extracellular; sequence GYSELGAIK. The helical transmembrane segment at 1314–1332 threads the bilayer; it reads SLRTLRALRPLRALSRFEG. Residues 1333–1345 are Cytoplasmic-facing; that stretch reads MRVVVNALLGAIP. Residues 1346–1369 traverse the membrane as a helical segment; sequence SIMNVLLVCLIFWLIFSIMGVNLF. Residues 1370 to 1415 lie on the Extracellular side of the membrane; that stretch reads AGKFYHCVNTTTGDIFEISEVNNHSDCLKLIERNETARWKNVKVNF. Cysteines 1376 and 1396 form a disulfide. Positions 1416-1433 form an intramembrane region, pore-forming; the sequence is DNVGFGYLSLLQVATFKG. The Extracellular segment spans residues 1434 to 1457; sequence WMDIMYAAVDSRNVELQPKYEESL. A helical transmembrane segment spans residues 1458–1483; sequence YMYLYFVIFIIFGSFFTLNLFIGVII. Residues 1484 to 1541 are Cytoplasmic-facing; sequence DNFNQQKKKFGGQDIFMTEEQKKYYNAMKKLGSKKPQKPIPRPGNKFQGMVFDFVTRQ. Ser1516 carries the phosphoserine; by PKC modification. An IV repeat occupies 1523 to 1821; the sequence is IPRPGNKFQG…WEKFDPDATQ (299 aa). Residues 1542-1560 form a helical membrane-spanning segment; it reads VFDISIMILICLNMVTMMV. The Extracellular segment spans residues 1561-1571; it reads ETDDQSDYVTS. The tract at residues 1561 to 1571 is S1-S2 loop of repeat IV; sequence ETDDQSDYVTS. A helical transmembrane segment spans residues 1572–1593; sequence ILSRINLVFIVLFTGECVLKLI. The Cytoplasmic segment spans residues 1594–1601; it reads SLRHYYFT. Residues 1602-1623 traverse the membrane as a helical segment; sequence IGWNIFDFVVVILSIVGMFLAE. An S3b-S4 loop of repeat IV region spans residues 1619-1636; that stretch reads MFLAELIEKYFVSPTLFR. The Extracellular portion of the chain corresponds to 1624 to 1636; sequence LIEKYFVSPTLFR. The chain crosses the membrane as a helical span at residues 1637–1655; the sequence is VIRLARIGRILRLIKGAKG. Residues 1656 to 1665 lie on the Cytoplasmic side of the membrane; the sequence is IRTLLFALMM. The helical transmembrane segment at 1666-1688 threads the bilayer; the sequence is SLPALFNIGLLLFLVMFIYAIFG. The Extracellular segment spans residues 1689-1711; that stretch reads MSNFAYVKREVGIDDMFNFETFG. An intramembrane region (pore-forming) is located at residues 1712–1726; the sequence is NSMICLFQITTSAGW. Topologically, residues 1727 to 1759 are extracellular; sequence DGLLAPILNSKPPDCDPNKVNPGSSVKGDCGNP. A disulfide bond links Cys1741 and Cys1756. A helical transmembrane segment spans residues 1760–1788; sequence SVGIFFFVSYIIISFLVVVNMYIAVILEN. Topologically, residues 1789–2009 are cytoplasmic; that stretch reads FSVATEESAE…EGKDEKAKGK (221 aa). The IQ domain occupies 1915 to 1944; the sequence is EEVSAVIIQRAYRRHLLKRTVKQASFTYNK. Positions 1984–2009 are disordered; sequence PSYDRVTKPIVEKHEQEGKDEKAKGK. The segment covering 1988–2009 has biased composition (basic and acidic residues); sequence RVTKPIVEKHEQEGKDEKAKGK.

Belongs to the sodium channel (TC 1.A.1.10) family. Nav1.1/SCN1A subfamily. In terms of assembly, the Nav1.1 voltage-gated sodium channel consists of an ion-conducting alpha subunit SCN1A which is functional on its own regulated by one or more beta-1 (SCN1B), beta-2 (SCN2B), beta-3 (SCN3B) and beta-4 (SCN4B) subunits. SCN1B and SCN3B are non-covalently associated with SCN1A. SCN2B and SCN4B are disulfide-linked to SCN1A. SCN1B regulates both the expression at the plasma membrane and the voltage dependence of Nav1.1 inactivation. SCN3B and SCN4B reduce Nav1.1 conductance. Probably interacts with TMEM233; modulates the gating properties of NaV1.1. Interacts with FGF13; regulates the steady-state inactivation of Nav.1.1. In terms of processing, phosphorylation at Ser-1516 by PKC in a highly conserved cytoplasmic loop slows inactivation of the sodium channel and reduces peak sodium currents. In terms of tissue distribution, present in cerebellar Purkinje neurons (at protein level). Expressed by myelinated, non-C-fiber neurons in sensory ganglia.

The protein resides in the cell membrane. The catalysed reaction is Na(+)(in) = Na(+)(out). Activated by the spider toxins Hm1a and Hm1b (H.maculata, AC P60992 and AC P0DOC5) eliciting acute pain and mechanical allodynia. Functionally, pore-forming subunit of Nav1.1, a voltage-gated sodium (Nav) channel that directly mediates the depolarizing phase of action potentials in excitable membranes. Navs, also called VGSCs (voltage-gated sodium channels) or VDSCs (voltage-dependent sodium channels), operate by switching between closed and open conformations depending on the voltage difference across the membrane. In the open conformation they allow Na(+) ions to selectively pass through the pore, along their electrochemical gradient. The influx of Na(+) ions provokes membrane depolarization, initiating the propagation of electrical signals throughout cells and tissues. By regulating the excitability of neurons, ensures that they respond appropriately to synaptic inputs, maintaining the balance between excitation and inhibition in brain neural circuits. Nav1.1 plays a role in controlling the excitability and action potential propagation from somatosensory neurons, thereby contributing to the sensory perception of mechanically-induced pain. The sequence is that of Sodium channel protein type 1 subunit alpha from Mus musculus (Mouse).